A 739-amino-acid polypeptide reads, in one-letter code: AN1-type zinc finger protein 4 (739 aa).

Residues 54-129 (MELFIETLTG…LKLVLAMRGG (76 aa)) enclose the Ubiquitin-like domain. Basic residues predominate over residues 246 to 255 (KPKKVVKVKP). 2 disordered regions span residues 246 to 270 (KPKKVVKVKPRPPLAPRPTSSSTAA) and 287 to 316 (LPSGNAHLPETSRNAGPSPAAQAPADRPVS). The segment at 673-720 (KKIMKHCFLCGKKTGLATSFECRCGNNFCASHRYAEAHGCTYDYKSAG) adopts an AN1-type zinc-finger fold. The Zn(2+) site is built by Cys-679, Cys-682, Cys-694, Cys-696, Cys-701, His-704, His-710, and Cys-712.

The chain is AN1-type zinc finger protein 4 (Zfand4) from Mus musculus (Mouse).